The primary structure comprises 332 residues: Biotin synthase (332 aa).

Residues 52 to 282 (FPENEVEFCS…KAELRLCGGR (231 aa)) enclose the Radical SAM core domain. 3 residues coordinate [4Fe-4S] cluster: cysteine 70, cysteine 74, and cysteine 77. 4 residues coordinate [2Fe-2S] cluster: cysteine 114, cysteine 147, cysteine 207, and arginine 277.

Belongs to the radical SAM superfamily. Biotin synthase family. Homodimer. Requires [4Fe-4S] cluster as cofactor. The cofactor is [2Fe-2S] cluster.

It carries out the reaction (4R,5S)-dethiobiotin + (sulfur carrier)-SH + 2 reduced [2Fe-2S]-[ferredoxin] + 2 S-adenosyl-L-methionine = (sulfur carrier)-H + biotin + 2 5'-deoxyadenosine + 2 L-methionine + 2 oxidized [2Fe-2S]-[ferredoxin]. It functions in the pathway cofactor biosynthesis; biotin biosynthesis; biotin from 7,8-diaminononanoate: step 2/2. Catalyzes the conversion of dethiobiotin (DTB) to biotin by the insertion of a sulfur atom into dethiobiotin via a radical-based mechanism. This Aquifex aeolicus (strain VF5) protein is Biotin synthase.